Consider the following 360-residue polypeptide: Peptide chain release factor 1 (360 aa).

Gln-235 is subject to N5-methylglutamine.

Belongs to the prokaryotic/mitochondrial release factor family. In terms of processing, methylated by PrmC. Methylation increases the termination efficiency of RF1.

It is found in the cytoplasm. In terms of biological role, peptide chain release factor 1 directs the termination of translation in response to the peptide chain termination codons UAG and UAA. The protein is Peptide chain release factor 1 of Burkholderia cenocepacia (strain HI2424).